The chain runs to 333 residues: Probable G-protein coupled receptor 174 (333 aa).

Residues 1-27 (MPANYTCTRPDGDNTDFRYFIYAVTYT) lie on the Extracellular side of the membrane. An N-linked (GlcNAc...) asparagine glycan is attached at asparagine 4. A helical transmembrane segment spans residues 28 to 48 (VILVPGLIGNILALWVFYGYM). Over 49–53 (KETKR) the chain is Cytoplasmic. Residues 54 to 74 (AVIFMINLAIADLLQVLSLPL) traverse the membrane as a helical segment. The Extracellular segment spans residues 75–91 (RIFYYLNHDWPFGPGLC). Cysteine 91 and cysteine 168 form a disulfide bridge. Residues 92 to 112 (MFCFYLKYVNMYASIYFLVCI) form a helical membrane-spanning segment. The Cytoplasmic segment spans residues 113-134 (SVRRFWFLMYPFRFHDCKQKYD). Residues 135–155 (LYISIAGWLIICLACVLFPLL) form a helical membrane-spanning segment. At 156 to 182 (RTSDDTSGNRTKCFVDLPTRNVNLAQS) the chain is on the extracellular side. N-linked (GlcNAc...) asparagine glycosylation occurs at asparagine 164. The chain crosses the membrane as a helical span at residues 183–203 (VVMMTIGELIGFVTPLLIVLY). Over 204-231 (CTWKTVLSLQDKYPMAQDLGEKQKALKM) the chain is Cytoplasmic. Residues 232 to 252 (ILTCAGVFLICFAPYHFSFPL) traverse the membrane as a helical segment. The Extracellular portion of the chain corresponds to 253–269 (DFLVKSNEIKSCLARRV). The chain crosses the membrane as a helical span at residues 270–290 (ILIFHSVALCLASLNSCLDPV). Over 291–333 (IYYFSTNEFRRRLSRQDLHDSIQLHAKSFVSNHTASTMTPELC) the chain is Cytoplasmic.

Belongs to the G-protein coupled receptor 1 family. Interacts with GNA13. Interacts with CCL21.

The protein localises to the cell membrane. G-protein-coupled receptor of lysophosphatidylserine (LysoPS) that plays different roles in immune response. Plays a negative role in regulatory T-cell accumulation and homeostasis. Under inflammatory conditions where LysoPS production increases, contributes to the down-regulation of regulatory T-cell activity to favor effector response. Mediates the suppression of IL-2 production in activated T-lymphocytes leading to inhibition of growth, proliferation and differentiation of T-cells. Mechanistically, acts via G(s)-containing heterotrimeric G proteins to trigger elevated cyclic AMP levels and protein kinase A/PKA activity, which may in turn act to antagonize proximal TCR signaling. Plays an important role in the initial period of sepsis through the regulation of macrophage polarization and pro- and anti-inflammatory cytokine secretions. Upon testosterone treatment, acts as a receptor for CCL21 and subsequently triggers through G(q)-alpha and G(12)/G(13) proteins a calcium flux leading to chemotactic effects on activated B-cells. Signals via GNA13 and PKA to promote CD86 up-regulation by follicular B-cells. The protein is Probable G-protein coupled receptor 174 (GPR174) of Homo sapiens (Human).